The sequence spans 542 residues: Neurofilament light polypeptide (542 aa).

S2 is subject to N-acetylserine. A head region spans residues 2 to 93 (SSFSYEPYFS…KSIRTQEKAQ (92 aa)). T21 carries O-linked (GlcNAc) threonine glycosylation. Position 23 is an asymmetric dimethylarginine; alternate (R23). R23 is subject to Omega-N-methylarginine; alternate. A glycan (O-linked (GlcNAc) serine) is linked at S27. Residue R30 is modified to Omega-N-methylarginine. Y43 bears the Phosphotyrosine mark. Phosphoserine is present on residues S56, S67, and S103. Positions 90–401 (EKAQLQDLND…KLLEGEETRL (312 aa)) constitute an IF rod domain. The interval 94 to 125 (LQDLNDRFASFIERVHELEQQNKVLEAELLVL) is coil 1A. Residues 126 to 138 (RQKHSEPSRFRAL) are linker 1. The coil 1B stretch occupies residues 139-234 (YEQEIRDLRL…KVHEEEIAEL (96 aa)). The linker 12 stretch occupies residues 235-253 (QAQIQYAQISVEMDVSSKP). A coil 2A region spans residues 254–272 (DLSAALKDIRAQYEKLAAK). The segment at 273–281 (NMQNAEEWF) is linker 2. Positions 282 to 397 (KSRFTVLTES…AAYRKLLEGE (116 aa)) are coil 2B. Residues 382 to 392 (ALDIEIAAYRK) form an epitope; recognized by IF-specific monoclonal antibody region. The segment at 398–444 (ETRLSFTSVGSITSGYSQSSQVFGRSAYSGLQSSSYLMSARAFPAYY) is tail, subdomain A. The tail stretch occupies residues 398-542 (ETRLSFTSVG…GEEQAAKKKD (145 aa)). Residues 445-542 (TSHVQEEQSE…GEEQAAKKKD (98 aa)) form a tail, subdomain B (acidic) region. Positions 451-542 (EQSEVEETIE…GEEQAAKKKD (92 aa)) are disordered. S453 is modified (phosphoserine). Positions 460 to 471 (EATKAEEAKDEP) are enriched in basic and acidic residues. The segment covering 472–527 (PSEGEAEEEEKEKEEGEEEEGAEEEEAAKDESEDAKEEEGGEGEEEDTKESEEEEK) has biased composition (acidic residues). A phosphoserine mark is found at S473 and S503. T519 is modified (phosphothreonine). Phosphoserine is present on residues S522 and S531. Residues 528-542 (KEESAGEEQAAKKKD) are compositionally biased toward basic and acidic residues.

It belongs to the intermediate filament family. As to quaternary structure, forms homodimers (in vitro). Forms heterodimers with NEFH or NEFM; which can further hetero-oligomerize (in vitro). Forms heterodimers with INA (in vitro). Interacts with ARHGEF28. Interacts with TRIM2. In terms of processing, O-glycosylated; contains three N-acetylglucosamine side chains. Phosphorylated in the head and rod regions by the PKC kinase PKN1, leading to the inhibition of polymerization. Post-translationally, ubiquitinated in the presence of TRIM2 and UBE2D1. As to expression, expressed in the dorsal root ganglion neurons (at protein level).

The protein localises to the cell projection. It is found in the axon. The protein resides in the cytoplasm. It localises to the cytoskeleton. Its function is as follows. Neurofilaments usually contain three intermediate filament proteins: NEFL, NEFM, and NEFH which are involved in the maintenance of neuronal caliber. May additionally cooperate with the neuronal intermediate filament proteins PRPH and INA to form neuronal filamentous networks. This is Neurofilament light polypeptide (Nefl) from Rattus norvegicus (Rat).